The following is a 299-amino-acid chain: Ribosomal RNA small subunit methyltransferase H 1 (299 aa).

S-adenosyl-L-methionine contacts are provided by residues 31-33, Asp50, Phe76, Asp97, and Gln104; that span reads GGH.

Belongs to the methyltransferase superfamily. RsmH family.

The protein localises to the cytoplasm. It catalyses the reaction cytidine(1402) in 16S rRNA + S-adenosyl-L-methionine = N(4)-methylcytidine(1402) in 16S rRNA + S-adenosyl-L-homocysteine + H(+). Its function is as follows. Specifically methylates the N4 position of cytidine in position 1402 (C1402) of 16S rRNA. The chain is Ribosomal RNA small subunit methyltransferase H 1 from Acholeplasma laidlawii (strain PG-8A).